The following is a 246-amino-acid chain: Probable transcriptional regulatory protein SPO1072 (246 aa).

Residues 1-22 (MAGHSKWANIQHRKGRQDAARS) form a disordered region.

It belongs to the TACO1 family.

The protein resides in the cytoplasm. This is Probable transcriptional regulatory protein SPO1072 from Ruegeria pomeroyi (strain ATCC 700808 / DSM 15171 / DSS-3) (Silicibacter pomeroyi).